Consider the following 300-residue polypeptide: Protoheme IX farnesyltransferase 1 (300 aa).

8 consecutive transmembrane segments (helical) span residues 26 to 46, 48 to 68, 97 to 117, 120 to 140, 148 to 168, 174 to 194, 226 to 246, and 280 to 300; these read VVVLMLITSLVGMFLATRAGV, WTVLVFGNLGIALCAGGAAAV, AALAFALLLALAGQALLLTFT, LTAWLTLASLLGYAVVYTGFL, IVIGGLAGAAPPLLGWVAATG, PLLLVLIIFAWTPPHFWALAI, FALLAVSLLPYVIHMSGVLYL, and IYYLFLLFIALLVDHYLLLNL.

It belongs to the UbiA prenyltransferase family. Protoheme IX farnesyltransferase subfamily.

It localises to the cell inner membrane. It catalyses the reaction heme b + (2E,6E)-farnesyl diphosphate + H2O = Fe(II)-heme o + diphosphate. It functions in the pathway porphyrin-containing compound metabolism; heme O biosynthesis; heme O from protoheme: step 1/1. Converts heme B (protoheme IX) to heme O by substitution of the vinyl group on carbon 2 of heme B porphyrin ring with a hydroxyethyl farnesyl side group. This is Protoheme IX farnesyltransferase 1 from Pseudomonas fluorescens (strain ATCC BAA-477 / NRRL B-23932 / Pf-5).